The primary structure comprises 46 residues: Endochitinase 3 (46 aa).

The segment at 1–21 (MTPQGNKPSSHDVITGRWTPS) is disordered.

Belongs to the glycosyl hydrolase 19 family. Chitinase class I subfamily.

It catalyses the reaction Random endo-hydrolysis of N-acetyl-beta-D-glucosaminide (1-&gt;4)-beta-linkages in chitin and chitodextrins.. Functionally, defense against chitin-containing fungal and bacterial pathogens. This chain is Endochitinase 3, found in Arachis hypogaea (Peanut).